Reading from the N-terminus, the 418-residue chain is IQ domain-containing protein C (418 aa).

In terms of domain architecture, IQ spans 6-35 (FLRKVSTLQAGFRGFLVRRQFQSLRAEYEA). 5 disordered regions span residues 101–142 (QKKT…SVSK), 230–264 (HHAEDSSHKGRLKPQKHPDSVTSAGKTTAGSKGRE), 280–299 (SQAGGDRVTKGPDHGGQPFK), 327–355 (AETQLPTLSENQNIEDRYSRKPSRSAGPC), and 376–418 (GSLD…LQWR). Composition is skewed to polar residues over residues 129 to 142 (KASQGNSQDTSVSK) and 249 to 259 (SVTSAGKTTAG). Residues 141–176 (SKMENADLGLSQSQQELQEQRNHLAMELLWLQQAIN) are a coiled coil. The span at 390 to 404 (PPSAGSSGHGNTSEL) shows a compositional bias: polar residues.

The chain is IQ domain-containing protein C (Iqcc) from Mus musculus (Mouse).